Here is a 333-residue protein sequence, read N- to C-terminus: Taste receptor type 2 member 38 (333 aa).

Over 1–17 (MLTLTRICAVSYEVRST) the chain is Extracellular. Residues 18–38 (FLFISVLEFAVGFLTNAFIFL) traverse the membrane as a helical segment. The Cytoplasmic portion of the chain corresponds to 39–55 (VNFWDVVKRQPLSNSDC). Residues 56 to 76 (VLLCLSISRLFLHGLLFLSAI) traverse the membrane as a helical segment. At 77–94 (QLTHFQKLSEPLNHSYQA) the chain is on the extracellular side. A helical membrane pass occupies residues 95–115 (IIMLWIIANQANLWLAACLSL). The Cytoplasmic segment spans residues 116–142 (LYCSKLIRFSHTFLICLASWVSRKISQ). The helical transmembrane segment at 143-163 (MLLGIILCSCICTVLCVWCFF) threads the bilayer. Residues 164 to 190 (SRPHFTVTTFLFMNNNTRLNWQIKDLN) lie on the Extracellular side of the membrane. A glycan (N-linked (GlcNAc...) asparagine) is linked at Asn-178. Residues 191–211 (LFYSFLFCYLWSVPPFLLFLV) form a helical membrane-spanning segment. The Cytoplasmic segment spans residues 212-251 (SSGMLTVSLGRHMRTMKVYTRDSRDPSLEAHIKALKSLVS). The helical transmembrane segment at 252–272 (FFCFFVISSCAAFISVPLLIL) threads the bilayer. Residues 273–276 (WRNK) are Extracellular-facing. The chain crosses the membrane as a helical span at residues 277–297 (IGVMVCVGIMAACPSGHAAVL). Residues 298–333 (ISGNATLRRAVTTILLWAQSSMKVRADHKADSRTLC) are Cytoplasmic-facing.

This sequence belongs to the G-protein coupled receptor T2R family.

The protein localises to the membrane. Functionally, receptor that may play a role in the perception of bitterness and is gustducin-linked. May play a role in sensing the chemical composition of the gastrointestinal content. The activity of this receptor may stimulate alpha gustducin, mediate PLC-beta-2 activation and lead to the gating of TRPM5. The polypeptide is Taste receptor type 2 member 38 (TAS2R38) (Pongo pygmaeus (Bornean orangutan)).